Consider the following 246-residue polypeptide: Proteasome subunit beta type-4 (246 aa).

The propeptide occupies 1–23 (MTTFSVPIDNGDSMKIAEEESQR). T24 functions as the Nucleophile in the catalytic mechanism.

Belongs to the peptidase T1B family. Component of the 20S core complex of the 26S proteasome. The 26S proteasome is composed of a core protease (CP), known as the 20S proteasome, capped at one or both ends by the 19S regulatory particle (RP/PA700). The 20S proteasome core is composed of 28 subunits that are arranged in four stacked rings, resulting in a barrel-shaped structure. The two end rings are each formed by seven alpha subunits, and the two central rings are each formed by seven beta subunits. The catalytic chamber with the active sites is on the inside of the barrel. Ubiquitous low levels, higher expression in siliques and flowers.

It is found in the cytoplasm. It localises to the nucleus. In terms of biological role, non-catalytic component of the proteasome, a multicatalytic proteinase complex which is characterized by its ability to cleave peptides with Arg, Phe, Tyr, Leu, and Glu adjacent to the leaving group at neutral or slightly basic pH. The proteasome has an ATP-dependent proteolytic activity. The polypeptide is Proteasome subunit beta type-4 (PBG1) (Arabidopsis thaliana (Mouse-ear cress)).